The primary structure comprises 335 residues: Nucleoid-associated protein PSEEN4449 (335 aa).

The protein belongs to the YejK family.

Its subcellular location is the cytoplasm. The protein resides in the nucleoid. This is Nucleoid-associated protein PSEEN4449 from Pseudomonas entomophila (strain L48).